The sequence spans 57 residues: COP9 signalosome complex subunit 9 (57 aa).

The protein belongs to the CSN9 family. As to quaternary structure, component of the CSN complex, probably composed of cops1, cops2, cops3, cops4, cops5, cops6, cops7, cops8 and cops9.

Its subcellular location is the nucleus. The protein resides in the cytoplasm. It localises to the nucleoplasm. Its function is as follows. Component of the COP9 signalosome complex (CSN), a complex involved in various cellular and developmental processes. The CSN complex is an essential regulator of the ubiquitin (Ubl) conjugation pathway by mediating the deneddylation of the cullin subunits of SCF-type E3 ligase complexes, leading to decrease the Ubl ligase activity. May play a role in cell proliferation. The protein is COP9 signalosome complex subunit 9 of Xenopus tropicalis (Western clawed frog).